The primary structure comprises 929 residues: Dual serine/threonine and tyrosine protein kinase (929 aa).

Positions 1–14 are enriched in low complexity; the sequence is MEGDGVPWGSEPVS. Residues 1–21 form a disordered region; it reads MEGDGVPWGSEPVSGPGPGGG. 2 coiled-coil regions span residues 189–215 and 395–431; these read EEDL…MHHA and RKKE…KEEL. The 255-residue stretch at 652-906 folds into the Protein kinase domain; that stretch reads PKLGQELGRG…PLLGIVQPML (255 aa). Residues 658-666 and Lys-681 contribute to the ATP site; that span reads LGRGQYGVV. The active-site Proton acceptor is the Asp-777.

This sequence belongs to the protein kinase superfamily. Ser/Thr protein kinase family. As to expression, predominantly expressed in skeletal muscle and testis. Expressed in basolateral and apical membranes of all tubular epithelia. Expressed in thin ascending limb of the loop of Henle and the distal convoluted tubule. Expressed in all layers of transitional ureteric epithelium and in the ureteric smooth-muscle cells. Weakly expressed in heart, brain, placenta, kidney, pancreas, spleen, thymus, prostate, uterus, small intestine, white blood cells, stomach, spinal cord and adrenal gland. Is widely distributed in the CNS. Also detected in several tumor cell lines. Expressed in the skin.

Its subcellular location is the cytoplasm. It is found in the cell membrane. The protein localises to the apical cell membrane. The protein resides in the basolateral cell membrane. It localises to the cell junction. The enzyme catalyses L-seryl-[protein] + ATP = O-phospho-L-seryl-[protein] + ADP + H(+). It carries out the reaction L-threonyl-[protein] + ATP = O-phospho-L-threonyl-[protein] + ADP + H(+). It catalyses the reaction L-tyrosyl-[protein] + ATP = O-phospho-L-tyrosyl-[protein] + ADP + H(+). Acts as a positive regulator of ERK phosphorylation downstream of fibroblast growth factor-receptor activation. Involved in the regulation of both caspase-dependent apoptosis and caspase-independent cell death. In the skin, it plays a predominant role in suppressing caspase-dependent apoptosis in response to UV stress in a range of dermal cell types. In Homo sapiens (Human), this protein is Dual serine/threonine and tyrosine protein kinase (DSTYK).